A 113-amino-acid chain; its full sequence is Large ribosomal subunit protein uL22 (113 aa).

This sequence belongs to the universal ribosomal protein uL22 family. As to quaternary structure, part of the 50S ribosomal subunit.

This protein binds specifically to 23S rRNA; its binding is stimulated by other ribosomal proteins, e.g. L4, L17, and L20. It is important during the early stages of 50S assembly. It makes multiple contacts with different domains of the 23S rRNA in the assembled 50S subunit and ribosome. Its function is as follows. The globular domain of the protein is located near the polypeptide exit tunnel on the outside of the subunit, while an extended beta-hairpin is found that lines the wall of the exit tunnel in the center of the 70S ribosome. The protein is Large ribosomal subunit protein uL22 of Xanthomonas oryzae pv. oryzae (strain MAFF 311018).